The sequence spans 395 residues: uncharacterized protein (395 aa).

A disordered region spans residues 247–270 (GGTVVPPNPDQPNPTPPDSSSPNY). Positions 252–265 (PPNPDQPNPTPPDS) are enriched in pro residues.

This is an uncharacterized protein from Vibrio cholerae serotype O1 (strain ATCC 39315 / El Tor Inaba N16961).